The primary structure comprises 483 residues: Krueppel-like factor 4 (483 aa).

The segment at 22-42 (TFASGPAGREKTLRPAGAPTN) is disordered. Residue Lys-32 forms a Glycyl lysine isopeptide (Lys-Gly) (interchain with G-Cter in ubiquitin) linkage. Positions 99 to 107 (DLLDLDFIL) match the 9aaTAD motif. At Ser-251 the chain carries Phosphoserine. The segment at 294-395 (AGPQLSNGHR…KRGRRSWPRK (102 aa)) is disordered. Pro residues predominate over residues 338-356 (LPLPPGFHPHPGPNYPPFL). Glu-381 is modified (5-glutamyl polyglutamate). Residues 386-395 (KRGRRSWPRK) are compositionally biased toward basic residues. Residues 386 to 483 (KRGRRSWPRK…HLALHMKRHF (98 aa)) form an interaction with ZNF296 region. 3 C2H2-type zinc fingers span residues 400 to 424 (HTCD…LRTH), 430 to 454 (YHCD…YRKH), and 460 to 482 (FQCQ…MKRH). Residues 443–474 (RSDELTRHYRKHTGHRPFQCQKCDRAFSRSDH) form an interaction with target DNA region.

It belongs to the krueppel C2H2-type zinc-finger protein family. As to quaternary structure, interacts with MUC1 (via the C-terminal domain). Interacts with POU5F1/OCT4 and SOX2. Interacts with MEIS2 isoform MeisD and PBX1 isoform PBX1a. Interacts with ZNF296. Interacts with GLIS1. Interacts with BTRC; this interaction leads to KLF4 ubiquitination and subsequent degradation. Interacts with IPO7; the interaction facilitates nuclear translocation of KLF4 in dental papilla cells. In terms of processing, ubiquitinated. 'Lys-48'-linked ubiquitinated and targeted for proteasomal degradation by the SCF(BTRC) E3 ubiquitin-protein ligase complex, thereby negatively regulating cell pluripotency maintenance and embryogenesis. Polyglutamylated by TTLL1 and TTLL4 at Glu-381, which inhibits KLF4 binding with E3 ligase component BTRC, thereby impeding ubiquitination. Deglutamylated by CCP1 and CCP6; deglutamylation promotes KLF4 ubiquitination. KLF4 glutamylation state plays a critical role in the regulation of its function in cell reprogramming, pluripotency maintenance and embryogenesis. Highest expression in the colon. Lower levels in testis, lung and small intestine.

The protein localises to the nucleus. It localises to the cytoplasm. In terms of biological role, transcription factor; can act both as activator and as repressor. Binds the 5'-CACCC-3' core sequence. Binds to the promoter region of its own gene and can activate its own transcription. Regulates the expression of key transcription factors during embryonic development. Plays an important role in maintaining embryonic stem cells, and in preventing their differentiation. Required for establishing the barrier function of the skin and for postnatal maturation and maintenance of the ocular surface. Involved in the differentiation of epithelial cells and may also function in skeletal and kidney development. Contributes to the down-regulation of p53/TP53 transcription. This is Krueppel-like factor 4 (Klf4) from Mus musculus (Mouse).